The sequence spans 72 residues: uncharacterized protein (72 aa).

Residues 11 to 31 (WCCTVLSAFGVVILSVIAHLF) traverse the membrane as a helical segment.

The protein resides in the membrane. This is an uncharacterized protein from Saccharomyces cerevisiae (strain ATCC 204508 / S288c) (Baker's yeast).